We begin with the raw amino-acid sequence, 414 residues long: 26S proteasome regulatory subunit 6B homolog (414 aa).

Positions 1–33 are disordered; the sequence is MAATMVLDPKPSSTPPPTLPNPYTTDSQSTDSE. Over residues 21-30 the composition is skewed to low complexity; it reads NPYTTDSQST. A coiled-coil region spans residues 55–81; sequence EYVKDELKNLKREQLRSQEEVKRIQSV. ATP is bound at residue 202 to 209; it reads GPPGTGKT.

This sequence belongs to the AAA ATPase family.

The protein localises to the cytoplasm. Its subcellular location is the nucleus. In terms of biological role, the 26S proteasome is involved in the ATP-dependent degradation of ubiquitinated proteins. The regulatory (or ATPase) complex confers ATP dependency and substrate specificity to the 26S complex. The protein is 26S proteasome regulatory subunit 6B homolog of Helianthus annuus (Common sunflower).